A 429-amino-acid polypeptide reads, in one-letter code: Adenylosuccinate synthetase (429 aa).

GTP is bound by residues 12-18 (GDEGKGK) and 40-42 (GHT). D13 acts as the Proton acceptor in catalysis. Mg(2+) is bound by residues D13 and G40. IMP contacts are provided by residues 13–16 (DEGK), 38–41 (NAGH), T129, R143, Q223, T238, and R302. H41 acts as the Proton donor in catalysis. 298–304 (VVTGRKR) contacts substrate. Residues R304, 330 to 332 (KLD), and 412 to 414 (STS) contribute to the GTP site.

This sequence belongs to the adenylosuccinate synthetase family. As to quaternary structure, homodimer. Mg(2+) is required as a cofactor.

It localises to the cytoplasm. It catalyses the reaction IMP + L-aspartate + GTP = N(6)-(1,2-dicarboxyethyl)-AMP + GDP + phosphate + 2 H(+). The protein operates within purine metabolism; AMP biosynthesis via de novo pathway; AMP from IMP: step 1/2. Plays an important role in the de novo pathway of purine nucleotide biosynthesis. Catalyzes the first committed step in the biosynthesis of AMP from IMP. The sequence is that of Adenylosuccinate synthetase from Maricaulis maris (strain MCS10) (Caulobacter maris).